The primary structure comprises 290 residues: Ribosomal RNA small subunit methyltransferase A (290 aa).

Positions 27, 29, 54, 75, 100, and 125 each coordinate S-adenosyl-L-methionine.

It belongs to the class I-like SAM-binding methyltransferase superfamily. rRNA adenine N(6)-methyltransferase family. RsmA subfamily.

The protein resides in the cytoplasm. It carries out the reaction adenosine(1518)/adenosine(1519) in 16S rRNA + 4 S-adenosyl-L-methionine = N(6)-dimethyladenosine(1518)/N(6)-dimethyladenosine(1519) in 16S rRNA + 4 S-adenosyl-L-homocysteine + 4 H(+). In terms of biological role, specifically dimethylates two adjacent adenosines (A1518 and A1519) in the loop of a conserved hairpin near the 3'-end of 16S rRNA in the 30S particle. May play a critical role in biogenesis of 30S subunits. In Streptococcus agalactiae serotype Ia (strain ATCC 27591 / A909 / CDC SS700), this protein is Ribosomal RNA small subunit methyltransferase A.